The following is a 515-amino-acid chain: Transcription termination factor Rho (515 aa).

The Rho RNA-BD domain occupies D146 to D221. ATP is bound by residues G264–A269, K276–T281, and R307.

This sequence belongs to the Rho family. Homohexamer. The homohexamer assembles into an open ring structure.

Its function is as follows. Facilitates transcription termination by a mechanism that involves Rho binding to the nascent RNA, activation of Rho's RNA-dependent ATPase activity, and release of the mRNA from the DNA template. The chain is Transcription termination factor Rho from Borreliella burgdorferi (strain ATCC 35210 / DSM 4680 / CIP 102532 / B31) (Borrelia burgdorferi).